A 409-amino-acid polypeptide reads, in one-letter code: Protein ROOT PRIMORDIUM DEFECTIVE 1 (409 aa).

One can recognise a PORR domain in the interval 47 to 386; it reads VRDHGYDNYM…RLAELVLMSP (340 aa).

In terms of tissue distribution, expressed in roots, hypocotyls, cotyledons and shoot apex.

Involved in pre-arranging the maintenance of the active cell proliferation during root primordium development. Does not seem to be involved in cell cycle progression. In Arabidopsis thaliana (Mouse-ear cress), this protein is Protein ROOT PRIMORDIUM DEFECTIVE 1 (RPD1).